Consider the following 208-residue polypeptide: Small ribosomal subunit protein uS4 (208 aa).

The S4 RNA-binding domain occupies 98-161 (RRLDNVVYRL…RKSKRFKEVF (64 aa)).

Belongs to the universal ribosomal protein uS4 family. As to quaternary structure, part of the 30S ribosomal subunit. Contacts protein S5. The interaction surface between S4 and S5 is involved in control of translational fidelity.

In terms of biological role, one of the primary rRNA binding proteins, it binds directly to 16S rRNA where it nucleates assembly of the body of the 30S subunit. Functionally, with S5 and S12 plays an important role in translational accuracy. The chain is Small ribosomal subunit protein uS4 from Halothermothrix orenii (strain H 168 / OCM 544 / DSM 9562).